The sequence spans 435 residues: Enolase (435 aa).

A (2R)-2-phosphoglycerate-binding site is contributed by glutamine 167. Glutamate 209 functions as the Proton donor in the catalytic mechanism. 3 residues coordinate Mg(2+): aspartate 246, glutamate 292, and aspartate 319. The (2R)-2-phosphoglycerate site is built by lysine 344, arginine 373, serine 374, and lysine 395. Lysine 344 functions as the Proton acceptor in the catalytic mechanism.

It belongs to the enolase family. The cofactor is Mg(2+).

It localises to the cytoplasm. Its subcellular location is the secreted. The protein resides in the cell surface. The enzyme catalyses (2R)-2-phosphoglycerate = phosphoenolpyruvate + H2O. Its pathway is carbohydrate degradation; glycolysis; pyruvate from D-glyceraldehyde 3-phosphate: step 4/5. In terms of biological role, catalyzes the reversible conversion of 2-phosphoglycerate (2-PG) into phosphoenolpyruvate (PEP). It is essential for the degradation of carbohydrates via glycolysis. The sequence is that of Enolase from Lachnospira eligens (strain ATCC 27750 / DSM 3376 / VPI C15-48 / C15-B4) (Eubacterium eligens).